The sequence spans 1946 residues: Chromodomain-helicase-DNA-binding protein 5 (1946 aa).

3 disordered regions span residues 1-140 (MRGP…SGQL), 236-272 (VPQT…GRGK), and 285-340 (SKRK…GDGY). Acidic residues-rich tracts occupy residues 17–37 (EEME…EGFE) and 72–90 (NDEM…ESEG). Basic residues-rich tracts occupy residues 96-118 (TKKK…KRKK) and 254-272 (GVRK…GRGK). Positions 293-303 (SEEDEREDSDL) are enriched in acidic residues. Residues 323-332 (KKNKRRRKKK) show a composition bias toward basic residues. PHD-type zinc fingers lie at residues 345–392 (QDYC…CEKE) and 418–465 (MEFC…CTCP). Residues 345 to 655 (QDYCEVCQQG…HRELMLGEDA (311 aa)) are histone-binding. Residues 499–556 (MPPPRPLEGIPEREFFVKWAGLSYWHCSWVKELQLELYHTVMYRNYQRKNDMDEPPPF) enclose the Chromo 1 domain. The segment at 551–573 (DEPPPFDYGSGDEDGKSEKRKNK) is disordered. Residues 563–573 (EDGKSEKRKNK) show a composition bias toward basic and acidic residues. Residues 594–655 (MMVHRILNHS…HRELMLGEDA (62 aa)) enclose the Chromo 2 domain. The Helicase ATP-binding domain occupies 714-898 (RFSWAQGTDT…FHLLNFLTPE (185 aa)). 727-734 (DEMGLGKT) is an ATP binding site. A DEAH box motif is present at residues 849–852 (DEAH). The Helicase C-terminal domain occupies 1030–1195 (LLQKMLKKLR…MTKQELDDIL (166 aa)). Disordered regions lie at residues 1210-1254 (MMSQ…VEDS), 1353-1413 (YNDA…LPPL), 1525-1566 (KYST…APLG), 1579-1696 (DEKE…EDKN), and 1926-1946 (SFPA…LQPF). Over residues 1212 to 1230 (SQGQRPTTPIPDIQSTKGG) the composition is skewed to polar residues. 2 stretches are compositionally biased toward acidic residues: residues 1357 to 1368 (SQEDQEWQDELS) and 1378 to 1387 (SEDEDEDFEE). Position 1392 is an N5-methylglutamine (Gln-1392). Positions 1551–1564 (TPVPASPAQLPPAP) are enriched in pro residues. Ser-1556 bears the Phosphoserine mark. Basic and acidic residues-rich tracts occupy residues 1602–1629 (DRVE…EVEK), 1637–1654 (PLKE…DKPE), and 1661–1676 (GDFR…KEPG).

Belongs to the SNF2/RAD54 helicase family. In terms of assembly, component of the nucleosome remodeling and deacetylase (NuRD) repressor complex, composed of core proteins MTA1, MTA2, MTA3, RBBP4, RBBP7, HDAC1, HDAC2, MBD2, MBD3, and peripherally associated proteins CDK2AP1, CDK2AP2, GATAD2A, GATAD2B, CHD3, CHD4 and CHD5. The exact stoichiometry of the NuRD complex is unknown, and some subunits such as MBD2 and MBD3, GATAD2A and GATAD2B, and CHD3, CHD4 and CHD5 define mutually exclusive NuRD complexes. Interacts with HDAC2. Methylated at Gln-1392 by N6AMT1. Specifically expressed by neurons in brain, retina and adrenal gland (at protein level). Also detected in testis.

It localises to the nucleus. The protein localises to the chromosome. It catalyses the reaction ATP + H2O = ADP + phosphate + H(+). Functionally, ATP-dependent chromatin-remodeling factor that binds DNA through histones and regulates gene transcription. May specifically recognize and bind trimethylated 'Lys-27' (H3K27me3) and non-methylated 'Lys-4' of histone H3. Acts as a component of the histone deacetylase NuRD complex which participates in the remodeling of chromatin. Plays a role in the development of the nervous system by activating the expression of genes promoting neuron terminal differentiation. In parallel, it may also positively regulate the trimethylation of histone H3 at 'Lys-27' thereby specifically repressing genes that promote the differentiation into non-neuronal cell lineages. Regulates the expression of genes involved in cell proliferation and differentiation. Downstream activated genes may include CDKN2A that positively regulates the p53/TP53 pathway, which in turn, prevents cell proliferation. In spermatogenesis, it probably regulates histone hyperacetylation and the replacement of histones by transition proteins in chromatin, a crucial step in the condensation of spermatid chromatin and the production of functional spermatozoa. This chain is Chromodomain-helicase-DNA-binding protein 5 (Chd5), found in Mus musculus (Mouse).